Here is a 309-residue protein sequence, read N- to C-terminus: Ribonuclease Z (309 aa).

The Zn(2+) site is built by H63, H65, D67, H68, H145, D216, and H274. D67 (proton acceptor) is an active-site residue.

Belongs to the RNase Z family. Homodimer. The cofactor is Zn(2+).

It carries out the reaction Endonucleolytic cleavage of RNA, removing extra 3' nucleotides from tRNA precursor, generating 3' termini of tRNAs. A 3'-hydroxy group is left at the tRNA terminus and a 5'-phosphoryl group is left at the trailer molecule.. Zinc phosphodiesterase, which displays some tRNA 3'-processing endonuclease activity. Probably involved in tRNA maturation, by removing a 3'-trailer from precursor tRNA. The sequence is that of Ribonuclease Z from Streptococcus pyogenes serotype M6 (strain ATCC BAA-946 / MGAS10394).